We begin with the raw amino-acid sequence, 413 residues long: Putative competence-damage inducible protein (413 aa).

It belongs to the CinA family.

In Acetivibrio thermocellus (strain ATCC 27405 / DSM 1237 / JCM 9322 / NBRC 103400 / NCIMB 10682 / NRRL B-4536 / VPI 7372) (Clostridium thermocellum), this protein is Putative competence-damage inducible protein.